We begin with the raw amino-acid sequence, 1155 residues long: Pesticidal crystal protein Cry1Ab (1155 aa).

Belongs to the delta endotoxin family.

Promotes colloidosmotic lysis by binding to the midgut epithelial cells of many lepidopteran larvae. This chain is Pesticidal crystal protein Cry1Ab (cry1Ab), found in Bacillus thuringiensis subsp. aizawai.